A 227-amino-acid chain; its full sequence is NAD(P)H-quinone oxidoreductase subunit K, chloroplastic (227 aa).

[4Fe-4S] cluster contacts are provided by Cys-43, Cys-44, Cys-108, and Cys-139.

Belongs to the complex I 20 kDa subunit family. In terms of assembly, NDH is composed of at least 16 different subunits, 5 of which are encoded in the nucleus. The cofactor is [4Fe-4S] cluster.

Its subcellular location is the plastid. It localises to the chloroplast thylakoid membrane. The enzyme catalyses a plastoquinone + NADH + (n+1) H(+)(in) = a plastoquinol + NAD(+) + n H(+)(out). It carries out the reaction a plastoquinone + NADPH + (n+1) H(+)(in) = a plastoquinol + NADP(+) + n H(+)(out). NDH shuttles electrons from NAD(P)H:plastoquinone, via FMN and iron-sulfur (Fe-S) centers, to quinones in the photosynthetic chain and possibly in a chloroplast respiratory chain. The immediate electron acceptor for the enzyme in this species is believed to be plastoquinone. Couples the redox reaction to proton translocation, and thus conserves the redox energy in a proton gradient. The sequence is that of NAD(P)H-quinone oxidoreductase subunit K, chloroplastic from Pelargonium hortorum (Common geranium).